The chain runs to 411 residues: Putative ion-transport protein YfeO (411 aa).

A run of 11 helical transmembrane segments spans residues 9–29 (MLLL…VLIA), 54–74 (DSPF…GLII), 99–119 (ALPG…SLGP), 149–169 (ILAS…AALI), 186–206 (LFAP…FFHP), 223–243 (IASG…AVWC), 258–278 (VLIL…GGPL), 296–316 (LGAG…VIAA), 322–342 (GGRI…LHAH), 343–363 (VEAV…VLVV), and 386–406 (LLCI…LLAA).

The protein belongs to the chloride channel (TC 2.A.49) family.

Its subcellular location is the cell membrane. In Salmonella schwarzengrund (strain CVM19633), this protein is Putative ion-transport protein YfeO.